Reading from the N-terminus, the 148-residue chain is Ribonuclease H (148 aa).

The RNase H type-1 domain occupies 2 to 143; sequence TADIIYIYSD…ADVLANQGVL (142 aa). 4 residues coordinate Mg(2+): Asp-11, Glu-49, Asp-71, and Asp-135.

This sequence belongs to the RNase H family. Monomer. It depends on Mg(2+) as a cofactor.

The protein resides in the cytoplasm. It carries out the reaction Endonucleolytic cleavage to 5'-phosphomonoester.. Functionally, endonuclease that specifically degrades the RNA of RNA-DNA hybrids. The polypeptide is Ribonuclease H (Thiobacillus denitrificans (strain ATCC 25259 / T1)).